Consider the following 370-residue polypeptide: D-alanine--D-alanine ligase (370 aa).

The region spanning 142-348 (KQILTHHHIQ…YTALIDQLIQ (207 aa)) is the ATP-grasp domain. 172-227 (QAHVGDHLFIKPANQGSSIGIHKAENEQEYLDGLADAFKYDYKILVEESIDNPREV) is a binding site for ATP. Mg(2+)-binding residues include Asp302, Glu315, and Asn317.

It belongs to the D-alanine--D-alanine ligase family. Requires Mg(2+) as cofactor. Mn(2+) serves as cofactor.

Its subcellular location is the cytoplasm. It carries out the reaction 2 D-alanine + ATP = D-alanyl-D-alanine + ADP + phosphate + H(+). The protein operates within cell wall biogenesis; peptidoglycan biosynthesis. Functionally, cell wall formation. The sequence is that of D-alanine--D-alanine ligase from Lactiplantibacillus plantarum (strain ATCC BAA-793 / NCIMB 8826 / WCFS1) (Lactobacillus plantarum).